We begin with the raw amino-acid sequence, 178 residues long: CASP-like protein 5A1 (178 aa).

Residues 1 to 24 (MFASRPAVHPVEAPPPTDPVEQPT) are disordered. At 1–37 (MFASRPAVHPVEAPPPTDPVEQPTGVLMKDLPGMPGT) the chain is on the cytoplasmic side. The chain crosses the membrane as a helical span at residues 38-58 (AGGLGLRVAQFVFAGVALAVM). The Extracellular segment spans residues 59–69 (ASTSDFPSVTA). Residues 70–90 (FCYLVAATIMQCLWSFSLAIV) traverse the membrane as a helical segment. Topologically, residues 91 to 105 (DIYALLVKRCLRNRR) are cytoplasmic. A helical transmembrane segment spans residues 106-126 (AVCLFAIGDGITAALTFGAAC). The Extracellular portion of the chain corresponds to 127–152 (SSAGITVLIDNDLNICAENHCGSFKT). Residues 153 to 173 (ATALAFMSWFALTPSFLLNFW) form a helical membrane-spanning segment. The Cytoplasmic segment spans residues 174-178 (SMAAR).

This sequence belongs to the Casparian strip membrane proteins (CASP) family. As to quaternary structure, homodimer and heterodimers.

The protein resides in the cell membrane. This chain is CASP-like protein 5A1, found in Brachypodium distachyon (Purple false brome).